A 147-amino-acid polypeptide reads, in one-letter code: Hemoglobin subunit epsilon (147 aa).

A Globin domain is found at 3–147 (HFTAEEKAAI…VAIALGHKYH (145 aa)). Phosphoserine is present on residues S14 and S51. Heme b-binding residues include H64 and H93.

This sequence belongs to the globin family. As to quaternary structure, heterotetramer of two alpha chains and two epsilon chains in early embryonic hemoglobin Gower-2; two zeta chains and two epsilon chains in early embryonic hemoglobin Gower-1. In terms of tissue distribution, red blood cells.

Its function is as follows. The epsilon chain is a beta-type chain of early mammalian embryonic hemoglobin. This chain is Hemoglobin subunit epsilon (HBE1), found in Callithrix jacchus (White-tufted-ear marmoset).